The primary structure comprises 292 residues: ATP synthase gamma chain (292 aa).

Belongs to the ATPase gamma chain family. As to quaternary structure, F-type ATPases have 2 components, CF(1) - the catalytic core - and CF(0) - the membrane proton channel. CF(1) has five subunits: alpha(3), beta(3), gamma(1), delta(1), epsilon(1). CF(0) has three main subunits: a, b and c.

The protein resides in the cell membrane. Produces ATP from ADP in the presence of a proton gradient across the membrane. The gamma chain is believed to be important in regulating ATPase activity and the flow of protons through the CF(0) complex. This Prosthecochloris aestuarii (strain DSM 271 / SK 413) protein is ATP synthase gamma chain.